A 457-amino-acid chain; its full sequence is Siroheme synthase (457 aa).

Positions 1–204 (MDHLPIFCQL…ADEKAVNATT (204 aa)) are precorrin-2 dehydrogenase /sirohydrochlorin ferrochelatase. Residues 22–23 (DV) and 43–44 (LT) each bind NAD(+). Position 128 is a phosphoserine (S128). Residues 216–457 (GEVVLVGAGP…RDKLNWFSNY (242 aa)) form a uroporphyrinogen-III C-methyltransferase region. P225 lines the S-adenosyl-L-methionine pocket. The active-site Proton acceptor is the D248. The active-site Proton donor is the K270. S-adenosyl-L-methionine-binding positions include 301 to 303 (GGD), I306, 331 to 332 (TA), M382, and G411.

It in the N-terminal section; belongs to the precorrin-2 dehydrogenase / sirohydrochlorin ferrochelatase family. In the C-terminal section; belongs to the precorrin methyltransferase family.

The catalysed reaction is uroporphyrinogen III + 2 S-adenosyl-L-methionine = precorrin-2 + 2 S-adenosyl-L-homocysteine + H(+). It carries out the reaction precorrin-2 + NAD(+) = sirohydrochlorin + NADH + 2 H(+). It catalyses the reaction siroheme + 2 H(+) = sirohydrochlorin + Fe(2+). It participates in cofactor biosynthesis; adenosylcobalamin biosynthesis; precorrin-2 from uroporphyrinogen III: step 1/1. The protein operates within cofactor biosynthesis; adenosylcobalamin biosynthesis; sirohydrochlorin from precorrin-2: step 1/1. Its pathway is porphyrin-containing compound metabolism; siroheme biosynthesis; precorrin-2 from uroporphyrinogen III: step 1/1. It functions in the pathway porphyrin-containing compound metabolism; siroheme biosynthesis; siroheme from sirohydrochlorin: step 1/1. It participates in porphyrin-containing compound metabolism; siroheme biosynthesis; sirohydrochlorin from precorrin-2: step 1/1. Multifunctional enzyme that catalyzes the SAM-dependent methylations of uroporphyrinogen III at position C-2 and C-7 to form precorrin-2 via precorrin-1. Then it catalyzes the NAD-dependent ring dehydrogenation of precorrin-2 to yield sirohydrochlorin. Finally, it catalyzes the ferrochelation of sirohydrochlorin to yield siroheme. The chain is Siroheme synthase from Salmonella dublin (strain CT_02021853).